Here is a 231-residue protein sequence, read N- to C-terminus: Phosphatidylserine decarboxylase proenzyme (231 aa).

Ser-188 functions as the Schiff-base intermediate with substrate; via pyruvic acid in the catalytic mechanism. A Pyruvic acid (Ser); by autocatalysis modification is found at Ser-188.

It belongs to the phosphatidylserine decarboxylase family. PSD-A subfamily. In terms of assembly, heterodimer of a large membrane-associated beta subunit and a small pyruvoyl-containing alpha subunit. Pyruvate serves as cofactor. In terms of processing, is synthesized initially as an inactive proenzyme. Formation of the active enzyme involves a self-maturation process in which the active site pyruvoyl group is generated from an internal serine residue via an autocatalytic post-translational modification. Two non-identical subunits are generated from the proenzyme in this reaction, and the pyruvate is formed at the N-terminus of the alpha chain, which is derived from the carboxyl end of the proenzyme. The post-translation cleavage follows an unusual pathway, termed non-hydrolytic serinolysis, in which the side chain hydroxyl group of the serine supplies its oxygen atom to form the C-terminus of the beta chain, while the remainder of the serine residue undergoes an oxidative deamination to produce ammonia and the pyruvoyl prosthetic group on the alpha chain.

It is found in the cell membrane. The enzyme catalyses a 1,2-diacyl-sn-glycero-3-phospho-L-serine + H(+) = a 1,2-diacyl-sn-glycero-3-phosphoethanolamine + CO2. It functions in the pathway phospholipid metabolism; phosphatidylethanolamine biosynthesis; phosphatidylethanolamine from CDP-diacylglycerol: step 2/2. Catalyzes the formation of phosphatidylethanolamine (PtdEtn) from phosphatidylserine (PtdSer). This is Phosphatidylserine decarboxylase proenzyme from Rickettsia felis (strain ATCC VR-1525 / URRWXCal2) (Rickettsia azadi).